A 177-amino-acid polypeptide reads, in one-letter code: Peptide methionine sulfoxide reductase MsrA (177 aa).

The active site involves C14.

The protein belongs to the MsrA Met sulfoxide reductase family.

It carries out the reaction L-methionyl-[protein] + [thioredoxin]-disulfide + H2O = L-methionyl-(S)-S-oxide-[protein] + [thioredoxin]-dithiol. It catalyses the reaction [thioredoxin]-disulfide + L-methionine + H2O = L-methionine (S)-S-oxide + [thioredoxin]-dithiol. Functionally, has an important function as a repair enzyme for proteins that have been inactivated by oxidation. Catalyzes the reversible oxidation-reduction of methionine sulfoxide in proteins to methionine. In Bacillus velezensis (strain DSM 23117 / BGSC 10A6 / LMG 26770 / FZB42) (Bacillus amyloliquefaciens subsp. plantarum), this protein is Peptide methionine sulfoxide reductase MsrA.